The sequence spans 369 residues: Forkhead box protein I2-A (369 aa).

Positions 124-218 (RPPYSYSSLI…DNGNFRRKRK (95 aa)) form a DNA-binding region, fork-head. Residues 215–252 (RKRKRKSESVGAGFDEDSNEDKKPLALKSLGSDSPQGA) are disordered.

Localized to the animal hemisphere of early cleavage stage embryos. Zygotic expression is restricted to the dorsal part of the epibranchial placodes of the head within a region located near the tip of the first, second and third visceral pouch.

It localises to the nucleus. Functionally, possible transcriptional activator. The polypeptide is Forkhead box protein I2-A (foxi2-a) (Xenopus laevis (African clawed frog)).